Consider the following 290-residue polypeptide: tRNA dimethylallyltransferase (290 aa).

11 to 18 (GPTASGKS) is an ATP binding site. A substrate-binding site is contributed by 13 to 18 (TASGKS). 2 interaction with substrate tRNA regions span residues 36 to 39 (DSMQ) and 158 to 162 (QRIVR).

The protein belongs to the IPP transferase family. Monomer. Mg(2+) serves as cofactor.

It catalyses the reaction adenosine(37) in tRNA + dimethylallyl diphosphate = N(6)-dimethylallyladenosine(37) in tRNA + diphosphate. Its function is as follows. Catalyzes the transfer of a dimethylallyl group onto the adenine at position 37 in tRNAs that read codons beginning with uridine, leading to the formation of N6-(dimethylallyl)adenosine (i(6)A). In Bartonella henselae (strain ATCC 49882 / DSM 28221 / CCUG 30454 / Houston 1) (Rochalimaea henselae), this protein is tRNA dimethylallyltransferase.